The following is a 1956-amino-acid chain: Probable cation-transporting ATPase 1 (1956 aa).

Residues 1 to 35 (MHLMCTGLRNEKLINDRKILYGECNLNIKSDSFII) lie on the Cytoplasmic side of the membrane. Residues 36–58 (LLFKEIMNPFFIFQIFAMIVWSL) traverse the membrane as a helical segment. Residues 59 to 61 (DNY) lie on the Extracellular side of the membrane. A helical transmembrane segment spans residues 62–80 (IEYTISILFITSISIILEL). Residues 81-407 (KNTIKNQKKI…KKELNLINDS (327 aa)) lie on the Cytoplasmic side of the membrane. Residues 408-427 (YKFLIILIIYALFSVFILLY) form a helical membrane-spanning segment. At 428 to 440 (ITLSNNEYTNHII) the chain is on the extracellular side. Residues 441–462 (IKCLDIITDAIPPALPTTLTVG) form a helical membrane-spanning segment. At 463 to 1818 (ISIAISRLKK…SLVNSFQLFK (1356 aa)) the chain is on the cytoplasmic side. Asp496 functions as the 4-aspartylphosphate intermediate in the catalytic mechanism. The tract at residues 901–938 (YGNNNDDNNDDDNNNDDDNNDDNNNDDNNNDDNNDDNN) is disordered. Residues 907-935 (DNNDDDNNNDDDNNDDNNNDDNNNDDNND) show a composition bias toward acidic residues. Asp1760 and Asp1764 together coordinate Mg(2+). The helical transmembrane segment at 1819 to 1837 (FISLYSIMQCSQVLILYSI) threads the bilayer. At 1838–1845 (SNKLTDNQ) the chain is on the extracellular side. The chain crosses the membrane as a helical span at residues 1846–1863 (YIFIDIVTILPLSIFMCW). Residues 1864 to 1881 (TSASEKLSKNIPIGKLFS) lie on the Cytoplasmic side of the membrane. A helical transmembrane segment spans residues 1882 to 1905 (FPILISIYGQIIIQLFFVMISLVV). Residues 1906–1928 (LMNLSFYKYDKNKVMKEKSDDTY) lie on the Extracellular side of the membrane. The chain crosses the membrane as a helical span at residues 1929–1952 (LYKAQKYTLIYSLLFSKFVYVYIF). Residues 1953 to 1956 (KYKE) are Cytoplasmic-facing.

Belongs to the cation transport ATPase (P-type) (TC 3.A.3) family. Type V subfamily.

The protein resides in the membrane. It catalyses the reaction ATP + H2O = ADP + phosphate + H(+). This chain is Probable cation-transporting ATPase 1, found in Plasmodium falciparum.